Reading from the N-terminus, the 358-residue chain is Histamine H2 receptor (358 aa).

The Extracellular portion of the chain corresponds to 1–22; that stretch reads MEPNGTVHSCCLDSMALKVTIS. N-linked (GlcNAc...) asparagine glycosylation occurs at Asn-4. A helical membrane pass occupies residues 23–44; that stretch reads VVLTTLILITIAGNVVVCLAVS. The Cytoplasmic portion of the chain corresponds to 45 to 57; that stretch reads LNRRLRSLTNCFI. Residues 58–81 traverse the membrane as a helical segment; that stretch reads VSLAATDLLLGLLVLPFSAIYQLS. At 82–92 the chain is on the extracellular side; the sequence is FTWSFGHVFCN. Cys-91 and Cys-173 form a disulfide bridge. A helical membrane pass occupies residues 93–114; it reads IYTSLDVMLCTASILNLFMISL. Over 115–134 the chain is Cytoplasmic; it reads DRYCAVTDPLRYPVLVTPVR. Residues 135–159 form a helical membrane-spanning segment; it reads VAISLVFIWVISITLSFLSIHLGWN. The Extracellular segment spans residues 160-179; it reads SRNGTRGGNDTFKCKVQVNE. A helical membrane pass occupies residues 180 to 203; that stretch reads VYGLVDGLVTFYLPLLIMCVTYYR. At 204–233 the chain is on the cytoplasmic side; it reads IFKIAREQAKRINHISSWKAATIREHKATV. A helical transmembrane segment spans residues 234 to 257; it reads TLAAVMGAFIICWFPYFTAFVYRG. At 258–266 the chain is on the extracellular side; that stretch reads LRGDDAINE. Residues 267-288 form a helical membrane-spanning segment; it reads AVEGIVLWLGYANSALNPILYA. Residues 289–358 lie on the Cytoplasmic side of the membrane; the sequence is ALNRDFRTAY…LTHPQGNPIR (70 aa). Residue Cys-304 is the site of S-palmitoyl cysteine attachment.

Belongs to the G-protein coupled receptor 1 family.

It is found in the cell membrane. Its function is as follows. The H2 subclass of histamine receptors mediates gastric acid secretion. The activity of this receptor is mediated by G proteins which activate adenylyl cyclase. This chain is Histamine H2 receptor (Hrh2), found in Rattus norvegicus (Rat).